The sequence spans 754 residues: 17S U2 SnRNP complex component HTATSF1 (754 aa).

Disordered stretches follow at residues 1 to 53 (MSGT…YEWD) and 81 to 122 (GASS…KAES). At S2 the chain carries N-acetylserine. The segment covering 90–122 (EDVHARTAEEPPQEKAPEPTDPRKKGEKRKAES) has biased composition (basic and acidic residues). 2 RRM domains span residues 133-218 (TNVY…VAKF) and 264-349 (RVVI…AWDG). Positions 259-353 (RMRHERVVII…AQAWDGTTDY (95 aa)) are U2AF homology motif (UHM). K297 is subject to N6-acetyllysine. Residues 380-415 (RGLRRSDSVSASERAGPSRARHFSEHPSTSKMNAQE) are disordered. The tract at residues 381–754 (GLRRSDSVSA…ILSSDDDDDI (374 aa)) is mediates interaction with the P-TEFb complex. Residues S387, S403, S407, and S409 each carry the phosphoserine modification. A compositionally biased stretch (polar residues) spans 405 to 415 (HPSTSKMNAQE). Residues K429 and K430 each participate in a glycyl lysine isopeptide (Lys-Gly) (interchain with G-Cter in SUMO2) cross-link. The tract at residues 433 to 754 (KTEDGGEFEE…ILSSDDDDDI (322 aa)) is disordered. A phosphoserine mark is found at S445, S452, and S453. Residues 462-476 (CPGKESEEGCPKRGF) show a composition bias toward basic and acidic residues. Phosphoserine is present on residues S481, S485, S494, S498, S521, and S529. Basic and acidic residues predominate over residues 508–538 (LRNDCEENGFAKESEDDPNKESEEEVGPTKE). Acidic residues predominate over residues 539-552 (SEEDDSEKESDEDC). A compositionally biased stretch (basic and acidic residues) spans 553-563 (SEKQSEDGSER). Phosphoserine is present on residues S557, S561, and S579. The segment covering 564–579 (EFEENGLEKDLDEEGS) has biased composition (acidic residues). Basic and acidic residues predominate over residues 580–590 (EKELHENVLDK). The segment covering 591-606 (ELEENDSENSEFEDDG) has biased composition (acidic residues). Phosphoserine occurs at positions 597, 600, 607, 616, and 624. 2 stretches are compositionally biased toward acidic residues: residues 613-633 (EEGSEREFDEDSDEKEEEEDT) and 640-651 (DESNEKEDEEYA). T633 carries the phosphothreonine modification. Phosphoserine is present on S642. The segment covering 652–674 (DEKGLEAADKKEEEGDADEKLFE) has biased composition (basic and acidic residues). Acidic residues predominate over residues 675-713 (ESDDKEDEDADGKEVEDADEKLFEDDDSNEKLFDEEEDS). A phosphoserine mark is found at S676, S702, S713, S721, and S748. Positions 714–725 (NEKLFDDSDERG) are enriched in basic and acidic residues.

It belongs to the HTATSF1 family. Component of the 17S U2 SnRNP complex, a ribonucleoprotein complex that contains small nuclear RNA (snRNA) U2 and a number of specific proteins. Within the 17S U2 SnRNP complex, interacts (via UHM region) directly with SF3B1. Component of a complex which is at least composed of HTATSF1/Tat-SF1, the P-TEFb complex components CDK9 and CCNT1, RNA polymerase II, SUPT5H, and NCL/nucleolin. Interacts with GTF2F2/RAP30 and POLR2A. Interacts with TCERG1/CA150. Interacts with (poly-ADP-ribosylated) RPA1; promoting HTATSF1 recruitment to DNA damage sites. Interacts (when phosphorylated) with TOPBP1; promoting recruitment of TOPBP1 to DNA damage sites during S-phase. Phosphorylation at Ser-748 by CK2 during S-phase in response to DNA damage promotes interaction with TOPBP1 and double-strand break (DSB) repair via homologous recombination.

The protein localises to the nucleus. The protein resides in the chromosome. Functionally, component of the 17S U2 SnRNP complex of the spliceosome, a large ribonucleoprotein complex that removes introns from transcribed pre-mRNAs. The 17S U2 SnRNP complex (1) directly participates in early spliceosome assembly and (2) mediates recognition of the intron branch site during pre-mRNA splicing by promoting the selection of the pre-mRNA branch-site adenosine, the nucleophile for the first step of splicing. Within the 17S U2 SnRNP complex, HTATSF1 is required to stabilize the branchpoint-interacting stem loop. HTATSF1 is displaced from the 17S U2 SnRNP complex before the stable addition of the 17S U2 SnRNP complex to the spliceosome, destabilizing the branchpoint-interacting stem loop and allowing to probe intron branch site sequences. Also acts as a regulator of transcriptional elongation, possibly by mediating the reciprocal stimulatory effect of splicing on transcriptional elongation. Involved in double-strand break (DSB) repair via homologous recombination in S-phase by promoting the recruitment of TOPBP1 to DNA damage sites. Mechanistically, HTATSF1 is (1) recruited to DNA damage sites in S-phase via interaction with poly-ADP-ribosylated RPA1 and (2) phosphorylated by CK2, promoting recruitment of TOPBP1, thereby facilitating RAD51 nucleofilaments formation and RPA displacement, followed by homologous recombination. The sequence is that of 17S U2 SnRNP complex component HTATSF1 (HTATSF1) from Pongo abelii (Sumatran orangutan).